A 286-amino-acid chain; its full sequence is MKRLLSIITAVMMLALALTGCAAKQSPEGEVEKTQAKGSIILATTTSTSDSGLLDYLLPEFTKDTGIEAKVVAVGTGQALQMGKDGEADVLLVHSKAAEEEFVAAGDGLERKDVMYNDFILVGPANDPLKLKQELPNDIVGALKKISEQKFKFISRGDDSGTHKKELALWTEVGITPEGDYYVSAGRGMGDVLKMADEMQAYTIADRGTYLSMKADLGLDIIVEKDTNLFNQYGVIPVNPDKNENINAEGAKAFEEWILSEKAQSLIGEYGKEKYGAPLFTPNAAK.

Residues 1–20 form the signal peptide; that stretch reads MKRLLSIITAVMMLALALTG. The N-palmitoyl cysteine moiety is linked to residue cysteine 21. The S-diacylglycerol cysteine moiety is linked to residue cysteine 21.

Monomer. The complex is composed of two ATP-binding proteins (TupC), two transmembrane proteins (TupB) and a solute-binding protein (TupA).

It is found in the cell membrane. In terms of biological role, part of an ABC transporter complex involved in tungstate uptake. Specifically binds tungstate. The protein is Tungstate-binding protein TupA of Peptoclostridium acidaminophilum (Eubacterium acidaminophilum).